The sequence spans 524 residues: Cytochrome P450 4F3 (524 aa).

Residues 19–39 (WLLLLLAGASCLLAYILTPIY) traverse the membrane as a helical segment. Cys-468 provides a ligand contact to heme.

Belongs to the cytochrome P450 family. Requires heme as cofactor. As to expression, highest level in polymorphonuclear leukocytes and dendritic cells. Detectable in lymph nodes, spleen, bone marrow and peripheral blood. Highly expressed in ovary. Very low level in liver, kidney, and smooth muscle. Expressed in neutrophils (at protein level).

The protein resides in the endoplasmic reticulum membrane. The protein localises to the microsome membrane. The catalysed reaction is leukotriene B4 + reduced [NADPH--hemoprotein reductase] + O2 = 18-hydroxy-leukotriene B4 + oxidized [NADPH--hemoprotein reductase] + H2O + H(+). It catalyses the reaction leukotriene B4 + reduced [NADPH--hemoprotein reductase] + O2 = 19-hydroxy-leukotriene B4 + oxidized [NADPH--hemoprotein reductase] + H2O + H(+). It functions in the pathway lipid metabolism; leukotriene B4 degradation. Its function is as follows. A cytochrome P450 monooxygenase involved in the metabolism of the pro-inflammatory lipid mediator leukotriene B4 (LTB4). Hydroxylates at the omega-1 and omega-2 positions LTB4. This oxidation step leads to LTB4 inactivation, which is postulated to be a crucial part of the resolution of inflammation. Mechanistically, uses molecular oxygen inserting one oxygen atom into a substrate, and reducing the second into a water molecule, with two electrons provided by NADPH via cytochrome P450 reductase (CPR; NADPH-ferrihemoprotein reductase). The chain is Cytochrome P450 4F3 from Mus musculus (Mouse).